The primary structure comprises 358 residues: Pituitary-specific positive transcription factor 1 (358 aa).

Residues 5–12 (AFSADSFT) carry the 9aaTAD motif. The interval 164-195 (PAVLSEEPPLGGTKDLRLRSRPPDDPPDMDSP) is disordered. Positions 177–187 (KDLRLRSRPPD) are enriched in basic and acidic residues. Residues 192–266 (MDSPQIRELE…ILAKWLDEAE (75 aa)) enclose the POU-specific domain. Residues 282–341 (KRKRRTTISLGAKEALERSFGEKIKPSSQEIVRMAEGLHLEKEVVRVWFCNRRQREKRVK) constitute a DNA-binding region (homeobox).

This sequence belongs to the POU transcription factor family. Class-1 subfamily.

The protein resides in the nucleus. Its function is as follows. Transcription factor that activates growth hormone and prolactin genes. Specifically binds to the consensus sequence 5'-TAAAT-3'. The sequence is that of Pituitary-specific positive transcription factor 1 (pou1f1) from Oncorhynchus mykiss (Rainbow trout).